The chain runs to 300 residues: uncharacterized protein (300 aa).

Residues 10–67 form the HTH lysR-type domain; that stretch reads FDLNLLVIFECIYQHLSISKAAESLYITPSAVSQSLQRLRAQFNDPLFIRSGKGIAPT. The H-T-H motif DNA-binding region spans 27-46; sequence ISKAAESLYITPSAVSQSLQ.

It belongs to the LysR transcriptional regulatory family.

This is an uncharacterized protein from Escherichia coli (strain K12).